The sequence spans 256 residues: Ribonuclease HII (256 aa).

The RNase H type-2 domain occupies 72 to 256 (QYVAGIDEVG…TFRPVPDYVN (185 aa)). Asp-78, Glu-79, and Asp-170 together coordinate a divalent metal cation.

This sequence belongs to the RNase HII family. Mn(2+) is required as a cofactor. Requires Mg(2+) as cofactor.

Its subcellular location is the cytoplasm. It carries out the reaction Endonucleolytic cleavage to 5'-phosphomonoester.. Endonuclease that specifically degrades the RNA of RNA-DNA hybrids. This chain is Ribonuclease HII, found in Limosilactobacillus fermentum (strain NBRC 3956 / LMG 18251) (Lactobacillus fermentum).